The chain runs to 193 residues: Ion-translocating oxidoreductase complex subunit A (193 aa).

The next 6 helical transmembrane spans lie at 5 to 25 (ALLLLSTALVNNVVLVKFLGL), 39 to 59 (LGMGLATTFVITLAAAASWML), 62 to 82 (WLLAPFDLGFLRILSFILVIA), 102 to 122 (SLGIYLPLITTNCAVLGVALL), 134 to 154 (VLFGFGSALGFTLVLLIFAGL), and 172 to 192 (AAFITISLLSLAFMGLSGLVA).

It belongs to the NqrDE/RnfAE family. In terms of assembly, the complex is composed of six subunits: RnfA, RnfB, RnfC, RnfD, RnfE and RnfG.

The protein localises to the cell inner membrane. Its function is as follows. Part of a membrane-bound complex that couples electron transfer with translocation of ions across the membrane. The protein is Ion-translocating oxidoreductase complex subunit A of Aromatoleum aromaticum (strain DSM 19018 / LMG 30748 / EbN1) (Azoarcus sp. (strain EbN1)).